We begin with the raw amino-acid sequence, 1028 residues long: Contactin-3 (1028 aa).

A signal peptide spans 1–19 (MMLSWKQLILLSFIGCLAG). Ig-like C2-type domains lie at 32–117 (PSNS…AKLQ), 122–209 (ENFK…RVLG), 227–313 (PKIE…GRLT), 318–402 (PYWL…AELK), 408–497 (PDFS…LVVT), and 499–593 (PTRI…AELI). 5 disulfides stabilise this stretch: C50–C100, C144–C196, C249–C297, C339–C386, and C431–C479. N-linked (GlcNAc...) asparagine glycans are attached at residues N65 and N193. Residues N377, N468, and N489 are each glycosylated (N-linked (GlcNAc...) asparagine). A disulfide bridge links C521 with C577. Fibronectin type-III domains follow at residues 600–698 (PPEN…TEEA), 703–800 (APSE…SAEE), 805–901 (APSH…TKKT), and 902–998 (PPSQ…TSMD). The disordered stretch occupies residues 684-714 (GEPSLPSEKVRTEEAAPEIAPSEVSGGGGSR). N765, N860, N895, N913, N931, and N956 each carry an N-linked (GlcNAc...) asparagine glycan. S1002 carries the GPI-anchor amidated serine lipid modification. Positions 1003–1028 (TSAISNIHPLSGYMSVLLFFIVNALW) are cleaved as a propeptide — removed in mature form.

The protein belongs to the immunoglobulin superfamily. Contactin family. As to quaternary structure, interacts with PTPRG. As to expression, specifically expressed in brain. Ectopically expressed in tumors expressing endogenous intracisternal A-type particles (IAPs).

Its subcellular location is the cell membrane. Contactins mediate cell surface interactions during nervous system development. Has some neurite outgrowth-promoting activity. The sequence is that of Contactin-3 (Cntn3) from Mus musculus (Mouse).